The following is a 378-amino-acid chain: Heterogeneous nuclear ribonucleoprotein A3 (378 aa).

The residue at position 1 (methionine 1) is an N-acetylmethionine. Over residues 1–10 the composition is skewed to pro residues; that stretch reads MEVKPPPGRP. A disordered region spans residues 1 to 34; it reads MEVKPPPGRPQPDSGRRRRRRGEEGHDPKEPEQL. Residue lysine 4 forms a Glycyl lysine isopeptide (Lys-Gly) (interchain with G-Cter in SUMO2) linkage. Residue serine 14 is modified to Phosphoserine. Positions 21-34 are enriched in basic and acidic residues; sequence RGEEGHDPKEPEQL. An RRM 1 domain is found at 35-118; it reads RKLFIGGLSF…RAVSREDSVK (84 aa). Lysine 36 is covalently cross-linked (Glycyl lysine isopeptide (Lys-Gly) (interchain with G-Cter in SUMO2)). Residue serine 43 is modified to Phosphoserine. The residue at position 52 (arginine 52) is a Dimethylated arginine; alternate. Arginine 52 bears the Omega-N-methylarginine; alternate mark. Arginine 76 bears the Omega-N-methylarginine mark. 2 positions are modified to phosphoserine: serine 112 and serine 116. Residue lysine 118 forms a Glycyl lysine isopeptide (Lys-Gly) (interchain with G-Cter in SUMO2) linkage. A Phosphothreonine modification is found at threonine 124. In terms of domain architecture, RRM 2 spans 126–205; sequence KKIFVGGIKE…CEVKKALSKQ (80 aa). Lysine 134 carries the post-translational modification N6-acetyllysine; alternate. Lysine 134 participates in a covalent cross-link: Glycyl lysine isopeptide (Lys-Gly) (interchain with G-Cter in SUMO2); alternate. Residues lysine 151 and lysine 182 each participate in a glycyl lysine isopeptide (Lys-Gly) (interchain with G-Cter in SUMO2) cross-link. Residues 204–225 are disordered; that stretch reads KQEMQSAGSQRGRGGGSGNFMG. Residues arginine 214, arginine 216, arginine 226, arginine 239, and arginine 246 each carry the omega-N-methylarginine; alternate modification. An asymmetric dimethylarginine; alternate mark is found at arginine 214, arginine 216, arginine 226, arginine 239, and arginine 246. Gly residues predominate over residues 214-225; that stretch reads RGRGGGSGNFMG. Arginine 257 carries the omega-N-methylarginine modification. At arginine 286 the chain carries Asymmetric dimethylarginine. Positions 336–378 are disordered; that stretch reads SGQQQSNYGPMKGGSFGGRSSGSPYGGGYGSGGGSGGYGSRRF. Gly residues predominate over residues 346–378; the sequence is MKGGSFGGRSSGSPYGGGYGSGGGSGGYGSRRF. A Phosphoserine modification is found at serine 350. An Omega-N-methylarginine modification is found at arginine 354. Position 358 is a phosphoserine (serine 358). Phosphotyrosine occurs at positions 360 and 364. Phosphoserine occurs at positions 366 and 370. A Phosphotyrosine modification is found at tyrosine 373. Serine 375 carries the post-translational modification Phosphoserine.

As to quaternary structure, identified in the spliceosome C complex.

It localises to the nucleus. Plays a role in cytoplasmic trafficking of RNA. Binds to the cis-acting response element, A2RE. May be involved in pre-mRNA splicing. This chain is Heterogeneous nuclear ribonucleoprotein A3 (HNRNPA3), found in Homo sapiens (Human).